Reading from the N-terminus, the 190-residue chain is Dynein axonemal light chain 1 (190 aa).

4 LRR repeats span residues 49–70 (VCEKLSLSTNCIEKIANLNGLK), 71–92 (NLKILSLGRNNIKNLNGLEAVG), 94–115 (SLEELWISYNSIEKLKGIHVLK), and 116–137 (KLKVLLMSNNQVKDWGEFNKLQ). The 41-residue stretch at 150–190 (NPLEEKHSAEGDWQDRVTKSLKALKKLDGTPIIKNDEEEED) folds into the LRRCT domain.

The protein belongs to the dynein light chain LC1-type family. Interacts with DNAH5, a outer arm dynein heavy chain. Interacts with tubulin located within the A-tubule of the outer doublets in a ATP-independent manner.

The protein localises to the cytoplasm. Its subcellular location is the cytoskeleton. It localises to the cilium axoneme. Its function is as follows. Part of the multisubunit axonemal ATPase complexes that generate the force for cilia motility and govern beat frequency. Component of the outer arm dynein (ODA). May be involved in a mechanosensory feedback mechanism controlling ODA activity based on external conformational cues by tethering the outer arm dynein heavy chain (DNAH5) to the microtubule within the axoneme. The protein is Dynein axonemal light chain 1 (DNAL1) of Ciona intestinalis (Transparent sea squirt).